The sequence spans 983 residues: Receptor-type tyrosine-protein phosphatase-like N (983 aa).

Positions 1–40 (MRRPRRPGGPAGCGGSEGSGGLRLLVCLLLLSGRPGGCSA) are cleaved as a signal peptide. Positions 41 to 137 (ISAHGCLFDR…HPRDRSGSVP (97 aa)) are RESP18 homology domain. The Lumenal portion of the chain corresponds to 41 to 579 (ISAHGCLFDR…RQAHGISPMR (539 aa)). A disulfide bridge links Cys59 with Cys68. Over residues 118 to 133 (RIPRLRPPEPHPRDRS) the composition is skewed to basic and acidic residues. Disordered stretches follow at residues 118–179 (RIPR…SPLS), 293–330 (RARAPRLPEEGGSSRAEDSSEGHEEEVLGGHGEKSPPQ), and 399–420 (GDTADARPPTPLLPGHPTASST). Residues 148-158 (SQGNPTGSSPA) show a composition bias toward polar residues. Basic and acidic residues predominate over residues 307–326 (RAEDSSEGHEEEVLGGHGEK). Phosphoserine is present on residues Ser311 and Ser312. A sufficient for dimerization of proICA512 region spans residues 453–579 (SPLGQSQPTV…RQAHGISPMR (127 aa)). Residues Asn510 and Asn528 are each glycosylated (N-linked (GlcNAc...) asparagine). The helical transmembrane segment at 580 to 604 (SLLLTLVALAGVAGLLVALAVALCM) threads the bilayer. The segment at 605–736 (RHHSKQRDKE…PNTCATAQGE (132 aa)) is sufficient for dimerization of proICA512. Over 605 to 983 (RHHSKQRDKE…VNAILKALPQ (379 aa)) the chain is Cytoplasmic. The disordered stretch occupies residues 648-684 (RAEGQPEPSRVSSVSSQFSDAAQASPSSHSSTPSWCE). Low complexity predominate over residues 652–681 (QPEPSRVSSVSSQFSDAAQASPSSHSSTPS). The region spanning 713–973 (LAKEWQALCA…EFALTAVAEE (261 aa)) is the Tyrosine-protein phosphatase domain. Lys758 is covalently cross-linked (Glycyl lysine isopeptide (Lys-Gly) (interchain with G-Cter in SUMO)).

This sequence belongs to the protein-tyrosine phosphatase family. Receptor class 8 subfamily. As to quaternary structure, homodimer; shown for the unprocessed protein (proICA512) in the endoplasmic reticulum and resolved during protein maturation as ICA512-TMF seems to be predominantly monomeric in secretory granules; however, ICA512-CCF interacts with ICA512-TMF disrupting the ICA512-TMF:SNTB2 complex. The isolated lumenal RESP18 homology domain has been shown to form disulfide-linked homooligomers. Interacts (via cytoplasmic domain) with phosphorylated SNTB2; this protects PTPRN against cleavage by CAPN1 to produce ICA512-CCF. Dephosphorylation of SNTB2 upon insulin stimulation disrupts the interaction and results in PTPRN cleavage. Interacts with SNX19. ICA512-CCF interacts with PIAS4; in the nucleus. Interacts with STAT5B (phosphorylated); down-regulated by ICA512-CCF sumoylation; ICA512-CCF prevents STAT5B dephosphorylation; ICA512-CCF mediates interaction of STAT5B with PIAS4. Interacts (via RESP18 homology domain) with insulin and proinsulin. Interacts with PTPRN2, PTPRA and PTPRE. Post-translationally, subject to proteolytic cleavage at multiple sites. Subject to cleavage on a pair of basic residues. Following exocytosis of secretory granules in pancreatic beta-cells ICA512-TMF located in the plasma-membrane is cleaved by mu-type calpain CPN1 to yield ICA512-CCF. N-glycosylated. In terms of processing, O-glycosylated. Post-translationally, sumoylated at two sites including Lys-758. Sumoylation decreases interaction with STAT5. In terms of tissue distribution, detected in pancreas islets. Detected in pancreas alpha, beta and delta cells, and in chromaffin cells in the adrenal medulla. Detected in amygdala, hypothalamus, autonomous nerve fibers and ganglia, especially at synaptic contacts. Detected in pituitary (at protein level). Detected in brain, specifically in cerebral cortex, diencephalon and brain stem.

The protein localises to the membrane. It is found in the cytoplasmic vesicle. The protein resides in the secretory vesicle membrane. Its subcellular location is the perikaryon. It localises to the cell projection. The protein localises to the axon. It is found in the synapse. The protein resides in the cell membrane. Its subcellular location is the endosome. It localises to the nucleus. Its function is as follows. Plays a role in vesicle-mediated secretory processes. Required for normal accumulation of secretory vesicles in hippocampus, pituitary and pancreatic islets. Required for the accumulation of normal levels of insulin-containing vesicles and preventing their degradation. Plays a role in insulin secretion in response to glucose stimuli. Required for normal accumulation of the neurotransmitters norepinephrine, dopamine and serotonin in the brain. In females, but not in males, required for normal accumulation and secretion of pituitary hormones, such as luteinizing hormone (LH) and follicle-stimulating hormone (FSH). Required to maintain normal levels of renin expression and renin release. Seems to lack intrinsic enzyme activity. In terms of biological role, ICA512-TMF regulates dynamics and exocytosis of insulin secretory granules (SGs); binding of ICA512-TMF to SNTB2/beta-2-syntrophin is proposed to restrain SGs mobility and exocytosis by tethering them to the actin cytoskeleton depending on UTRN; the function is inhibited by cytoplasmic ICA512-CFF dimerizing with ICA512-TMF and displacing SNTB2. ICA512-CCF translocated to the nucleus promotes expression of insulin and other granule-related genes; the function implicates binding to and regulating activity of STAT5B probably by preventing its dephosphorylation and potentially by inducing its sumoylation by recruiting PIAS4. Enhances pancreatic beta-cell proliferation by converging with signaling by STAT5B and STAT3. ICA512-CCF located in the cytoplasm regulates dynamics and exocytosis of insulin secretory granules (SGs) by dimerizing with ICA512-TMF and displacing SNTB2 thus enhancing SGs mobility and exocytosis. This is Receptor-type tyrosine-protein phosphatase-like N (Ptprn) from Rattus norvegicus (Rat).